The chain runs to 151 residues: Group 10 secretory phospholipase A2 (151 aa).

An N-terminal signal peptide occupies residues 1–17 (MLLLLLLLLLGPGSCLS). Residues 18–28 (EATRRSHVYKR) constitute a propeptide that is removed on maturation. Intrachain disulfides connect C39–C97, C53–C143, C55–C71, C70–C125, C76–C150, C77–C118, C86–C111, and C104–C116. The Ca(2+) site is built by Y54, G56, and G58. H74 is an active-site residue. D75 provides a ligand contact to Ca(2+). Residue D119 is part of the active site.

It belongs to the phospholipase A2 family. As to quaternary structure, interacts with PLA2R1; this interaction mediates PLA2G10 clearance and inactivation. It depends on Ca(2+) as a cofactor.

It localises to the secreted. Its subcellular location is the lysosome. The protein localises to the cytoplasmic vesicle. The protein resides in the secretory vesicle. It is found in the acrosome. It catalyses the reaction a 1,2-diacyl-sn-glycero-3-phosphocholine + H2O = a 1-acyl-sn-glycero-3-phosphocholine + a fatty acid + H(+). The catalysed reaction is 1-hexadecanoyl-2-(9Z-octadecenoyl)-sn-glycero-3-phosphocholine + H2O = 1-hexadecanoyl-sn-glycero-3-phosphocholine + (9Z)-octadecenoate + H(+). It carries out the reaction 1-octadecanoyl-2-(5Z,8Z,11Z,14Z-eicosatetraenoyl)-sn-glycero-3-phosphocholine + H2O = 1-octadecanoyl-sn-glycero-3-phosphocholine + (5Z,8Z,11Z,14Z)-eicosatetraenoate + H(+). The enzyme catalyses 1,2-dihexadecanoyl-sn-glycero-3-phosphocholine + H2O = 1-hexadecanoyl-sn-glycero-3-phosphocholine + hexadecanoate + H(+). It catalyses the reaction 1-hexadecanoyl-2-(9Z-octadecenoyl)-sn-glycero-3-phosphoglycerol + H2O = 1-hexadecanoyl-sn-glycero-3-phosphoglycerol + (9Z)-octadecenoate + H(+). The catalysed reaction is 1,2-dihexadecanoyl-sn-glycero-3-phospho-(1'-sn-glycerol) + H2O = 1-hexadecanoyl-sn-glycero-3-phospho-(1'-sn-glycerol) + hexadecanoate + H(+). It carries out the reaction 1-hexadecanoyl-2-(9Z-octadecenoyl)-sn-glycero-3-phospho-L-serine + H2O = 1-hexadecanoyl-sn-glycero-3-phospho-L-serine + (9Z)-octadecenoate + H(+). The enzyme catalyses 1-hexadecanoyl-2-(9Z,12Z-octadecadienoyl)-sn-glycero-3-phosphoethanolamine + H2O = 1-hexadecanoyl-sn-glycero-3-phosphoethanolamine + (9Z,12Z)-octadecadienoate + H(+). It catalyses the reaction 1-hexadecanoyl-2-(9Z-octadecenoyl)-sn-glycero-3-phosphate + H2O = 1-hexadecanoyl-sn-glycero-3-phosphate + (9Z)-octadecenoate + H(+). The catalysed reaction is 1-O-hexadecyl-2-acetyl-sn-glycero-3-phosphocholine + H2O = 1-O-hexadecyl-sn-glycero-3-phosphocholine + acetate + H(+). Secretory calcium-dependent phospholipase A2 that primarily targets extracellular phospholipids. Hydrolyzes the ester bond of the fatty acyl group attached at sn-2 position of phospholipids with preference for phosphatidylcholines and phosphatidylglycerols over phosphatidylethanolamines. Preferentially releases sn-2 omega-6 and omega-3 polyunsaturated fatty acyl (PUFA) chains over saturated fatty acyls. Contributes to phospholipid remodeling of very low-density lipoprotein (VLDL), low-density lipoprotein (LDL) and high-density lipoprotein (HDL) particles. Hydrolyzes LDL phospholipids releasing unsaturated fatty acids that regulate macrophage differentiation toward foam cells. Efficiently hydrolyzes and inactivates platelet activating factor (PAF), a potent lipid mediator present in oxidized LDL. May act in an autocrine and paracrine manner. Secreted by lung epithelium, targets membrane phospholipids of infiltrating eosinophils, releasing arachidonate and boosting eicosanoid and cysteinyl leukotriene synthesis involved in airway inflammatory response. Secreted by gut epithelium, hydrolyzes dietary and biliary phosphatidylcholines in the gastrointestinal lumen. Plays a stem cell regulator role in colon epithelium. Within intracellular compartment, mediates Paneth-like cell differentiation and its stem cell supporting functions by inhibiting the Wnt signaling pathway in intestinal stem cell (ISC). Secreted in the intestinal lumen upon inflammation, acts in an autocrine way and promotes prostaglandin E2 synthesis that stimulates Wnt signaling pathway in ISCs and tissue regeneration. May participate in hair follicle morphogenesis by regulating phosphatidylethanolamines metabolism at the outermost epithelial layer and facilitating melanin synthesis. By releasing lysophosphatidylcholines (LPCs) at sperm acrosome, controls sperm cell capacitation, acrosome reaction and overall fertility. May promote neurite outgrowth in neuron fibers involved in nociception. Contributes to lipid remodeling of cellular membranes and generation of lipid mediators involved in pathogen clearance. Cleaves sn-2 fatty acyl chains of phosphatidylglycerols and phosphatidylethanolamines, which are major components of membrane phospholipids in bacteria. Displays bactericidal activity against Gram-positive bacteria by directly hydrolyzing phospholipids of the bacterial membrane. In pulmonary epithelium, may contribute to host defense response against adenoviral infection. Prevents adenovirus entry into host cells by hydrolyzing host cell plasma membrane, releasing C16:0 LPCs that inhibit virus-mediated membrane fusion and viral infection. Likely prevents adenoviral entry into the endosomes of host cells. May play a role in maturation and activation of innate immune cells including macrophages, group 2 innate lymphoid cells and mast cells. The protein is Group 10 secretory phospholipase A2 (Pla2g10) of Rattus norvegicus (Rat).